Here is a 457-residue protein sequence, read N- to C-terminus: Peptidyl-prolyl cis-trans isomerase FKBP5 (457 aa).

The residue at position 1 (methionine 1) is an N-acetylmethionine. A disordered region spans residues 1–26 (MTTDEGAKNSRGNPAATVAEQGEDVT). The residue at position 28 (lysine 28) is an N6-acetyllysine. 2 consecutive PPIase FKBP-type domains span residues 50–138 (GDRV…LDFK) and 165–251 (GARV…KSFE). TPR repeat units lie at residues 268-301 (AAIVKEKGTVYFKGGKYVQAVIQYGKIVSWLEME), 317-350 (LAAFLNLAMCYLKLREYTKAVECCDKALGLDSAN), and 351-384 (EKGLYRRGEAQLLMNEFESAKGDFEKVLEVNPQN). The interval 421–457 (AKEEANKAMSKKTSEGVTNEKLTASHAVEEEKPEGHV) is disordered. A Phosphoserine modification is found at serine 445. Residues 447–457 (AVEEEKPEGHV) are compositionally biased toward basic and acidic residues.

As to quaternary structure, part of a heteromultimeric cytoplasmic complex with HSP90AA1, HSPA1A/HSPA1B and steroid receptors. Upon ligand binding dissociates from the complex and FKBP4 takes its place. Interacts with functionally mature heterooligomeric progesterone receptor complexes along with HSP90 and TEBP. Interacts with NR3C1. Interacts with Akt/AKT1 and PHLPP1; enhancing dephosphorylation and subsequent activation of Akt/AKT1. Interacts with IFI44L; this interaction modulates the kinase activity of IKBKB and IKBKE. Interacts with IKBKB and IKBKE. Acetylation impairs ability to promote interaction between Akt/AKT1 and PHLPP1. Deacetylation by SIRT7 promotes interaction between Akt/AKT1 and PHLPP1, leading to suppress Akt/AKT1 activation. In terms of processing, ubiquitinated, leading to degradation in a proteasome-dependent manner. Deubiquitinated by USP49, leading to stabilization.

The protein localises to the cytoplasm. It is found in the nucleus. The enzyme catalyses [protein]-peptidylproline (omega=180) = [protein]-peptidylproline (omega=0). Inhibited by both FK506 and rapamycin. In terms of biological role, immunophilin protein with PPIase and co-chaperone activities. Component of unligated steroid receptors heterocomplexes through interaction with heat-shock protein 90 (HSP90). Plays a role in the intracellular trafficking of heterooligomeric forms of steroid hormone receptors maintaining the complex into the cytoplasm when unliganded. Acts as a regulator of Akt/AKT1 activity by promoting the interaction between Akt/AKT1 and PHLPP1, thereby enhancing dephosphorylation and subsequent activation of Akt/AKT1. Interacts with IKBKE and IKBKB which facilitates IKK complex assembly leading to increased IKBKE and IKBKB kinase activity, NF-kappaB activation, and IFN production. This Saimiri boliviensis boliviensis (Bolivian squirrel monkey) protein is Peptidyl-prolyl cis-trans isomerase FKBP5 (FKBP5).